A 31-amino-acid polypeptide reads, in one-letter code: Cytochrome b6-f complex subunit 6 (31 aa).

A helical transmembrane segment spans residues 4 to 24; the sequence is LLSYFGFLFAILTLTSVLFIG.

The protein belongs to the PetL family. As to quaternary structure, the 4 large subunits of the cytochrome b6-f complex are cytochrome b6, subunit IV (17 kDa polypeptide, PetD), cytochrome f and the Rieske protein, while the 4 small subunits are PetG, PetL, PetM and PetN. The complex functions as a dimer.

The protein localises to the plastid. The protein resides in the chloroplast thylakoid membrane. In terms of biological role, component of the cytochrome b6-f complex, which mediates electron transfer between photosystem II (PSII) and photosystem I (PSI), cyclic electron flow around PSI, and state transitions. PetL is important for photoautotrophic growth as well as for electron transfer efficiency and stability of the cytochrome b6-f complex. This is Cytochrome b6-f complex subunit 6 from Angiopteris evecta (Mule's foot fern).